A 217-amino-acid chain; its full sequence is Large ribosomal subunit protein uL1 (217 aa).

Belongs to the universal ribosomal protein uL1 family. As to quaternary structure, part of the 50S ribosomal subunit.

Its function is as follows. Binds directly to 23S rRNA. Probably involved in E site tRNA release. In terms of biological role, protein L1 is also a translational repressor protein, it controls the translation of its operon by binding to its mRNA. This Thermoplasma acidophilum (strain ATCC 25905 / DSM 1728 / JCM 9062 / NBRC 15155 / AMRC-C165) protein is Large ribosomal subunit protein uL1.